A 214-amino-acid chain; its full sequence is A-type ATP synthase subunit D (214 aa).

It belongs to the V-ATPase D subunit family. As to quaternary structure, has multiple subunits with at least A(3), B(3), C, D, E, F, H, I and proteolipid K(x).

It localises to the cell membrane. Its function is as follows. Component of the A-type ATP synthase that produces ATP from ADP in the presence of a proton gradient across the membrane. This is A-type ATP synthase subunit D from Thermococcus kodakarensis (strain ATCC BAA-918 / JCM 12380 / KOD1) (Pyrococcus kodakaraensis (strain KOD1)).